A 384-amino-acid chain; its full sequence is Sialyltransferase-like protein 3 (384 aa).

Residues 1 to 5 (MKRRH) are Cytoplasmic-facing. The chain crosses the membrane as a helical; Signal-anchor for type II membrane protein span at residues 6 to 26 (WSHPSCGLLLLVAVFCLLLVF). Residues 27–384 (RCSQLRHSGD…FRLPPVSFYR (358 aa)) lie on the Lumenal side of the membrane. The N-linked (GlcNAc...) asparagine glycan is linked to Asn241.

This sequence belongs to the glycosyltransferase 29 family.

It is found in the golgi apparatus membrane. Its function is as follows. Possesses sialyltransferase-like activity in vitro. Transfers sialic acid to the glycoprotein asialofetuin. The transferred sialic acid is linked to galactose of Gal-beta-1,3-GalNAc through alpha-2,6-linkage. The sequence is that of Sialyltransferase-like protein 3 from Oryza sativa subsp. indica (Rice).